We begin with the raw amino-acid sequence, 571 residues long: External alternative NAD(P)H-ubiquinone oxidoreductase B1, mitochondrial (571 aa).

A mitochondrion-targeting transit peptide spans 1 to 35 (MTLLSSLGRASRSAPLASKLLLLGTLSGGSIVAYA). FAD is bound at residue 51–81 (KVVVLGTGWAGISFLKDLDITSYDVQVVSPQ). 215 to 251 (LHFVIVGGGPTGVEFAAELHDFIIEDITKIYPSVKEL) contributes to the NAD(+) binding site. The 36-residue stretch at 372–407 (KILGDIANIFKAADADNSGTLTMEELEGVVDDIIVR) folds into the EF-hand domain. Ca(2+) is bound by residues D385, D387, S389, T391, and E396. The short motif at 562 to 571 (YIFGRDSSRI) is the Microbody targeting signal element.

Belongs to the NADH dehydrogenase family. Requires FAD as cofactor. In terms of tissue distribution, expressed in seedlings, roots, cotyledons, leaves, stems, buds and flowers.

It localises to the mitochondrion inner membrane. It is found in the peroxisome. The catalysed reaction is a quinone + NADH + H(+) = a quinol + NAD(+). It catalyses the reaction a ubiquinone + NADH + H(+) = a ubiquinol + NAD(+). Its activity is regulated as follows. Activity is calcium-dependent with a more pronounced effect at higher pH. In terms of biological role, alternative NADH-ubiquinone oxidoreductase which catalyzes the oxidation of mitochondrial NADH does not translocate protons across the inner mitochondrial membrane. Calcium-dependent NAD(P)H dehydrogenase. Binds calcium ions. The polypeptide is External alternative NAD(P)H-ubiquinone oxidoreductase B1, mitochondrial (NDB1) (Arabidopsis thaliana (Mouse-ear cress)).